Reading from the N-terminus, the 880-residue chain is MEANSADQKQKPNFLVEVNNIEKQLWTLIHSKTILHTDVSELYAKAGSTYEQIFKSNLQHEELQEVEFCLWKLHYKHIDEFRKGLKTNDHAKHMKAFKLFLSKAAEFYQNLISKVRGYYHRLSEESGEQKSRFLCHRFYICLGDLQRYQEQYLKAHEHPNWSTAATYYLEAAKSWPDSGNPHNQLAVLATYVSDELLALYHCVRSLAVKEPFPGASNNLLLLFEKNRSSPLQSLSTDAEFNYLNPSEKKVSVKERDLSKAKGELVAGIDLWPLVVRTTSFFFLKSSFDEFGRAFASTIRELDAAFAADDRNLEAMLESYQFMDTARKGPYKILQIVAVFIYIFHNLAEANGSDIVKEEVKLTNLALTMVFIVMGRVVERCLKTTPLDSCPLLPALLVFLDYLPFLLDKVEEEEEECRFDEKSKSAISYFFGKLVDILNQLKVKDKNCPAKTLLALWEDHELKSLAPLAPIHALLDFSSNMDLRESFDRGKELRLQRIISSAIDITTRQKKGSQKWLFFDNQRTHFYTTSGELQSNGELFHGNGEGRNRKCVTIGPVEIIPLENERSVPVEEEEVILLKPLVRCQSAPIYSSGIAAKPLSSDCTTSGNQTTTSNDSLRRTLSLIGSESFSFTQGLKDTDPQHLHLEEGTVSGRPPSLSAWVVDKNKEKGRLGLSKPNGLGPIDETGPVSAFDSLSINSSTEHPASSYSPPTPSAPLLPEDASWFHNDASTNKAESFYDQTRYMELPGIMKPYTNPPFVGISSSEWLRRYRESRNLGPAYSYQAQGTNNLRNFMAHGSSKFSLLARYGTPNDSSQNSTFHPQLYMEDHESRGEKLGNVQQSTTNPYGFSDDPGPFLRFLREKEWLNENGQRLRGPPPAYMNN.

TPR repeat units lie at residues 149–183 and 184–217; these read QEQYLKAHEHPNWSTAATYYLEAAKSWPDSGNPHN and QLAVLATYVSDELLALYHCVRSLAVKEPFPGASN. A disordered region spans residues 669–711; that stretch reads RLGLSKPNGLGPIDETGPVSAFDSLSINSSTEHPASSYSPPTP. Residues 691 to 701 are compositionally biased toward polar residues; that stretch reads DSLSINSSTEH.

May play a role in growth and development. This chain is Nonsense-mediated mRNA decay factor SMG7-like, found in Arabidopsis thaliana (Mouse-ear cress).